The following is a 93-amino-acid chain: Cobalt transport protein CbiN (93 aa).

Helical transmembrane passes span 5–25 (LILL…NHGG) and 63–83 (LLFT…LGYA).

Belongs to the CbiN family. As to quaternary structure, forms an energy-coupling factor (ECF) transporter complex composed of an ATP-binding protein (A component, CbiO), a transmembrane protein (T component, CbiQ) and 2 possible substrate-capture proteins (S components, CbiM and CbiN) of unknown stoichimetry.

It localises to the cell inner membrane. The protein operates within cofactor biosynthesis; adenosylcobalamin biosynthesis. Functionally, part of the energy-coupling factor (ECF) transporter complex CbiMNOQ involved in cobalt import. The chain is Cobalt transport protein CbiN from Klebsiella pneumoniae subsp. pneumoniae (strain ATCC 700721 / MGH 78578).